Here is a 273-residue protein sequence, read N- to C-terminus: Formamidopyrimidine-DNA glycosylase (273 aa).

The active-site Schiff-base intermediate with DNA is P2. E3 functions as the Proton donor in the catalytic mechanism. Residue K57 is the Proton donor; for beta-elimination activity of the active site. DNA contacts are provided by H90, R109, and K150. The FPG-type zinc-finger motif lies at 235 to 269 (KVYGRAGKECPVCSSKIEEEKIGQRNSFWCGKCQF). The Proton donor; for delta-elimination activity role is filled by R259.

It belongs to the FPG family. In terms of assembly, monomer. The cofactor is Zn(2+).

The catalysed reaction is Hydrolysis of DNA containing ring-opened 7-methylguanine residues, releasing 2,6-diamino-4-hydroxy-5-(N-methyl)formamidopyrimidine.. The enzyme catalyses 2'-deoxyribonucleotide-(2'-deoxyribose 5'-phosphate)-2'-deoxyribonucleotide-DNA = a 3'-end 2'-deoxyribonucleotide-(2,3-dehydro-2,3-deoxyribose 5'-phosphate)-DNA + a 5'-end 5'-phospho-2'-deoxyribonucleoside-DNA + H(+). Functionally, involved in base excision repair of DNA damaged by oxidation or by mutagenic agents. Acts as a DNA glycosylase that recognizes and removes damaged bases. Has a preference for oxidized purines, such as 7,8-dihydro-8-oxoguanine (8-oxoG). Has AP (apurinic/apyrimidinic) lyase activity and introduces nicks in the DNA strand. Cleaves the DNA backbone by beta-delta elimination to generate a single-strand break at the site of the removed base with both 3'- and 5'-phosphates. In Aliivibrio fischeri (strain MJ11) (Vibrio fischeri), this protein is Formamidopyrimidine-DNA glycosylase.